A 1173-amino-acid polypeptide reads, in one-letter code: Paired amphipathic helix protein Sin3-like 6 (1173 aa).

The tract at residues 40-75 (NQSAGESGRRLKMKRAREDVHTDTQKRKPEVSSRGE) is disordered. Positions 55–75 (AREDVHTDTQKRKPEVSSRGE) are enriched in basic and acidic residues. 2 consecutive PAH domains span residues 79–148 (LPRT…LPKG) and 162–232 (IRVD…LPNC). 3 disordered regions span residues 236–337 (APST…TTKY), 655–697 (TASG…TAQP), and 740–813 (KHEL…ENNK). Composition is skewed to basic and acidic residues over residues 264–276 (CKLE…SDQR) and 301–319 (RDYE…RTEK). Polar residues predominate over residues 320–337 (SAASGSQDIGNHKSTTKY). Polar residues predominate over residues 750–765 (PTASREQSNFEVNGQN). The segment covering 778–810 (RSNKDKQSCDKKGAKNKTRAEDDKQENCHKLSE) has biased composition (basic and acidic residues).

The protein resides in the nucleus. Functionally, acts as a transcriptional repressor. Plays roles in regulating gene expression and genome stability. This Arabidopsis thaliana (Mouse-ear cress) protein is Paired amphipathic helix protein Sin3-like 6 (SNL6).